A 200-amino-acid chain; its full sequence is Holliday junction resolvase RecU (200 aa).

4 residues coordinate Mg(2+): threonine 85, aspartate 87, glutamate 100, and glutamine 119.

It belongs to the RecU family. It depends on Mg(2+) as a cofactor.

Its subcellular location is the cytoplasm. The enzyme catalyses Endonucleolytic cleavage at a junction such as a reciprocal single-stranded crossover between two homologous DNA duplexes (Holliday junction).. Functionally, endonuclease that resolves Holliday junction intermediates in genetic recombination. Cleaves mobile four-strand junctions by introducing symmetrical nicks in paired strands. Promotes annealing of linear ssDNA with homologous dsDNA. Required for DNA repair, homologous recombination and chromosome segregation. The sequence is that of Holliday junction resolvase RecU from Bacillus cytotoxicus (strain DSM 22905 / CIP 110041 / 391-98 / NVH 391-98).